The chain runs to 4235 residues: Tenellin synthetase (4235 aa).

In terms of domain architecture, Ketosynthase family 3 (KS3) spans 15–455 (SEPIAIVGSA…GTNAHAIIER (441 aa)). Active-site for beta-ketoacyl synthase activity residues include cysteine 189, histidine 326, and histidine 375. A malonyl-CoA:ACP transacylase (MAT) domain region spans residues 590–924 (IFTGQGAQWP…ANDAVAFSTA (335 aa)). Residues 993 to 1135 (HELLGRRMPD…GRIAVHLGAK (143 aa)) form an N-terminal hotdog fold region. A dehydratase (DH) domain region spans residues 993–1310 (HELLGRRMPD…GFEVRAVGEP (318 aa)). The 321-residue stretch at 993–1313 (HELLGRRMPD…VRAVGEPDAS (321 aa)) folds into the PKS/mFAS DH domain. Histidine 1025 serves as the catalytic Proton acceptor; for dehydratase activity. A C-terminal hotdog fold region spans residues 1158 to 1313 (LQQLDCEKLY…VRAVGEPDAS (156 aa)). Aspartate 1217 serves as the catalytic Proton donor; for dehydratase activity. The interval 1459–1652 (RLYTEDKGMH…FSGVDHIVHD (194 aa)) is methyltransferase (MT) domain. The ketoreductase (KR) domain stretch occupies residues 2208 to 2381 (TYLMVGAAGG…AASIIHVGHV (174 aa)). The Carrier 1 domain occupies 2500–2580 (EAAAAALKGF…QLSALAAKLA (81 aa)). An O-(pantetheine 4'-phosphoryl)serine modification is found at serine 2540. Residues 2587-2709 (RAQLEEASGN…EISSNGFFTQ (123 aa)) are disordered. Basic and acidic residues predominate over residues 2605–2619 (NDKETGPSKKGKAQE). Composition is skewed to polar residues over residues 2645 to 2659 (GGSS…SSVS) and 2666 to 2678 (QEST…NNGE). Low complexity predominate over residues 2679–2695 (STPSKSSNCNSDSGSDN). The condensation (C) domain stretch occupies residues 2720 to 3163 (REAPMSPAQS…TAQSVGDCVV (444 aa)). An adenylation (A) (KR) domain region spans residues 3197–3609 (CQQHSTKSAI…DGTLLCFGRI (413 aa)). Positions 3724-3750 (DEAAAATSPSNDNNNNNTPSGGGGEKM) are disordered. The segment covering 3726-3742 (AAAATSPSNDNNNNNTP) has biased composition (low complexity). The 86-residue stretch at 3748-3833 (EKMTVRQGEL…GMARCVAEQR (86 aa)) folds into the Carrier 2 domain. Residue serine 3793 is modified to O-(pantetheine 4'-phosphoryl)serine. Residues 3860–3889 (EKLQHSSASSSSSSSSSSAGSSSTQRPRKT) are disordered. The segment covering 3865–3882 (SSASSSSSSSSSSAGSSS) has biased composition (low complexity). The tract at residues 3896-4141 (LTGATGFLGG…LDFGQVDKVV (246 aa)) is reductase (RED) domain.

The protein in the C-terminal section; belongs to the NRP synthetase family.

Its pathway is secondary metabolite biosynthesis. Hybrid PKS-NRPS synthetase; part of the gene cluster that mediates the biosynthesis of tenellin-type 2-pyridones, iron-chelating compounds involved in iron stress tolerance, competition with the natural competitor fungus Metarhizium robertsii and insect hosts infection. TenS catalyzes the assembly of the polyketide-amino acid backbone. Because tenS lacks a designated enoylreductase (ER) domain, the required activity is provided the enoyl reductase tenC. Upon formation of the polyketide backbone on the thiotemplate, the triketide is transferred to the NRPS module and linked to tyrosine to produce the pyrrolidine-2-dione intermediates, including pretellinin A, 11-hydropretellenin A, 12-hydropretellenin A, 13-hydropretellenin A, 14-hydropretellenin A, 12-oxopretellenin A and prototellinin D. The pathway begins with the assembly of the polyketide-amino acid backbone by the hybrid PKS-NRPS tenS with the help of the enoyl reductase tenC. These enzymes catalyze the synthesis of the pyrrolidine-2-dione intermediates pretellinin A, 11-hydropretellenin A, 12-hydropretellenin A, 13-hydropretellenin A, 14-hydropretellenin A, 12-oxopretellenin A and prototellinin D. The cytochrome P450 monooxygenase tenA then catalyzes an oxidative ring expansion of pretenellin A and 14-hydropretellenin A to form the 2-pyridone core, leading to pretenellin B and pyridovericin, respectively. The cytochrome P450 monooxygenase tenB is then required for the selective N-hydroxylation of the 2-pyridone nitrogen of yield tellinin and 15-hydroxytellenin (15-HT), respectively. The UDP-glucosyltransferase GT1 and the methyltransferase MT1, located outside the tenS gene cluster, contribute to the stepwise glycosylation and methylation of 15-HT to obtain the glycoside pyridovericin-N-O-(4-O-methyl-beta-D-glucopyranoside) (PMGP). Additional related compounds such as 1-O-methyl-15-HT, (8Z)-1-O-methyl-15-HT, and O-methyltenellin A are also produced but the enzymes involved in their biosynthesis have still to be determined. The polypeptide is Tenellin synthetase (Beauveria bassiana (strain ARSEF 2860) (White muscardine disease fungus)).